Consider the following 487-residue polypeptide: Protein translocase subunit SecY (487 aa).

Residues Met-1 to Pro-20 lie on the Cytoplasmic side of the membrane. Residues Glu-21–Lys-47 form a helical membrane-spanning segment. Residues Leu-48 to Val-59 lie on the Extracellular side of the membrane. The helical intramembrane region spans Phe-60 to Leu-67. A discontinuously helical transmembrane segment spans residues Phe-60–Val-88. The stretch at Ala-68–Ile-79 is an intramembrane region. Residues Gly-80 to Val-88 constitute an intramembrane region (helical). The Cytoplasmic portion of the chain corresponds to Leu-89–Ile-110. A helical membrane pass occupies residues Leu-111–Gly-135. At Gly-136–Ala-153 the chain is on the extracellular side. Residues Gly-154–Ser-178 traverse the membrane as a helical segment. The Cytoplasmic segment spans residues Lys-179–Ser-184. Residues Gly-185–Leu-203 traverse the membrane as a helical segment. Residues Thr-204–Gly-244 are Extracellular-facing. Residues Glu-245–Arg-266 form a helical membrane-spanning segment. Topologically, residues Val-267–Ser-291 are cytoplasmic. The helical transmembrane segment at Val-292–Asn-313 threads the bilayer. Over Ala-314–Thr-364 the chain is Extracellular. Residues Arg-365–Trp-384 form a helical membrane-spanning segment. At Val-385–Val-427 the chain is on the cytoplasmic side. Residues Thr-428 to Gly-446 form a helical membrane-spanning segment. The Extracellular segment spans residues Thr-447 to Val-451. Residues Ser-452 to Leu-466 form a helical membrane-spanning segment. The Cytoplasmic segment spans residues Tyr-467 to Gly-487.

Belongs to the SecY/SEC61-alpha family. As to quaternary structure, component of the Sec protein translocase complex. Heterotrimer consisting of alpha (SecY), beta (SecG) and gamma (SecE) subunits. The heterotrimers can form oligomers, although 1 heterotrimer is thought to be able to translocate proteins. Interacts with the ribosome. May interact with SecDF, and other proteins may be involved.

The protein localises to the cell membrane. The central subunit of the protein translocation channel SecYEG. Consists of two halves formed by TMs 1-5 and 6-10. These two domains form a lateral gate at the front which open onto the bilayer between TMs 2 and 7, and are clamped together by SecE at the back. The channel is closed by both a pore ring composed of hydrophobic SecY resides and a short helix (helix 2A) on the extracellular side of the membrane which forms a plug. The plug probably moves laterally to allow the channel to open. The ring and the pore may move independently. The polypeptide is Protein translocase subunit SecY (Haloarcula marismortui (strain ATCC 43049 / DSM 3752 / JCM 8966 / VKM B-1809) (Halobacterium marismortui)).